The chain runs to 738 residues: MISAVFGKRRSLSRTLTAGTICAALISGYATMASADDGQGATGEAIIHADDHPGNWMTYGRTYSDQRYSPLDQINRSNVGNLKLAWYLDLDTNRGQEGTPLVIDGVMYATTNWSMMKAVDAATGKLLWSYDPRVPGNIADKGCCDTVNRGAAYWNGKVYFGTFDGRLIALDAKTGKLVWSVNTIPPEAELGKQRSYTVDGAPRIAKGRVIIGNGGSEFGARGFVSAFDAETGKVDWRFFTVPNPKNEPDAASDSVLMNKAYQTWSPTGAWTRQGGGGTVWDSIVYDPVADLVYLGVGNGSPWNYKYRSEGKGDNLFLGSIVALKPETGEYVWHFQETPMDQWDFTSDQQIMTLDLPINGETRHVIVHARKNGFFYIIDAKTGEFISGKNYVYVNWASGLDPKTGRPIYNPDALYTLTGKEWYGIPGDLGGHNFAAMAFSPKTGLVYIPAQQVPFLYTNQVGGFTPHPDSWNLGLDMNKVGIPDSPEAKQAFVKDLKGWIVAWDPQKQAEAWRVDHKGPWNGGILATGGDLLFQGLANGEFHAYDATNGSDLFHFAADSGIIAPPVTYLANGKQYVAVEVGWGGIYPFFLGGLARTSGWTVNHSRIIAFSLDGKSGPLPKQNDQGFLPVKPPAQFDSKRTDNGYFQFQTYCAACHGDNAEGAGVLPDLRWSGSIRHEDAFYNVVGRGALTAYGMDRLHGNMNPTEIEDIRQFLIKRANETYQREVDARKNADGIPEQLP.

A signal peptide spans 1-35 (MISAVFGKRRSLSRTLTAGTICAALISGYATMASA). Residue glutamate 97 participates in pyrroloquinoline quinone binding. Cysteine 143 and cysteine 144 are joined by a disulfide. Position 149 (arginine 149) interacts with pyrroloquinoline quinone. Glutamate 217 is a binding site for Ca(2+). Threonine 278 is a pyrroloquinoline quinone binding site. Positions 298 and 343 each coordinate Ca(2+). Aspartate 343 (proton acceptor) is an active-site residue. Positions 370 and 584 each coordinate pyrroloquinoline quinone. Residues 634 to 738 (FDSKRTDNGY…NADGIPEQLP (105 aa)) enclose the Cytochrome c domain. 4 residues coordinate heme c: cysteine 650, cysteine 653, histidine 654, and methionine 693.

It belongs to the bacterial PQQ dehydrogenase family. In terms of assembly, the alcohol dehydrogenase multicomponent enzyme system is composed of a dehydrogenase subunit I (AdhA) and a cytochrome c subunit II (AdhB). Requires pyrroloquinoline quinone as cofactor. Ca(2+) is required as a cofactor. Heme c serves as cofactor.

It localises to the cell membrane. It carries out the reaction ethanol + a ubiquinone = a ubiquinol + acetaldehyde. In terms of biological role, dehydrogenase component of the alcohol dehydrogenase multicomponent enzyme system which is involved in the production of acetic acid and in the ethanol oxidase respiratory chain. Quinohemoprotein alcohol dehydrogenase (ADH) catalyzes the oxidation of ethanol to acetaldehyde by transferring electrons to the ubiquinone embedded in the membrane phospholipids. The electrons transfer from ethanol to membranous ubiquinone occurs from pyrroloquinoline quinone (PQQ) to one heme c in subunit I (AdhA), and finally to two heme c in subunit II (AdhB). Besides ubiquinone reduction, ADH also has a ubiquinol (QH2) oxidation reaction which mediates electron transfer from ubiquinol to the non-energy generating bypass oxidase system. The electrons transfer occurs from ubiquinol (QH2) to the additional heme c within subunit II (AdhB). The chain is Alcohol dehydrogenase (quinone), dehydrogenase subunit (adhA) from Gluconacetobacter polyoxogenes (Acetobacter polyoxogenes).